We begin with the raw amino-acid sequence, 624 residues long: Laccase-1 (624 aa).

A signal peptide spans 1–20 (MRGLAKLFFLSCSFVSLVSS). 2 consecutive Plastocyanin-like domains span residues 72–183 (FASP…HSPN) and 195–343 (DRIV…CMFG). Residues His117 and His119 each contribute to the Cu cation site. A disulfide bridge links Cys138 with Cys578. A glycan (N-linked (GlcNAc...) asparagine) is linked at Asn149. Cu cation contacts are provided by His162 and His164. Residues Asn242 and Asn430 are each glycosylated (N-linked (GlcNAc...) asparagine). Residues 469–562 (IIINNLDTVI…GKLAVIVVQP (94 aa)) form the Plastocyanin-like 3 domain. Cu cation contacts are provided by His480, His483, and His485. Asn503 carries an N-linked (GlcNAc...) asparagine glycan. Cu cation is bound by residues His543, Cys544, His545, and His549. A disordered region spans residues 579–604 (ANTDPNAFGPAKRSSSPSIQSSKTSS). Over residues 592–604 (SSSPSIQSSKTSS) the composition is skewed to low complexity.

The protein belongs to the multicopper oxidase family. Requires Cu cation as cofactor.

The protein localises to the secreted. Its subcellular location is the cell wall. It catalyses the reaction 4 hydroquinone + O2 = 4 benzosemiquinone + 2 H2O. Laccase that catalyzes the oxidation of certain aromatic compounds, including L-dopa, to quinones, which then polymerize to melanin. Able to oxidize a wide variety of aromatic diphenol and diamino groups in the ortho, meta, and para positions but not monophenolic groups such as in phenol, tyramine, or tyrosine. Plays an important role in virulence. Plays a role in dissemination to extrapulmonary sites but is not involved in pulmonary growth or in elicitation of cellular immune responses in the lung. The sequence is that of Laccase-1 from Cryptococcus neoformans var. neoformans serotype D (strain B-3501A) (Filobasidiella neoformans).